The following is a 417-amino-acid chain: Phosphoglycerate kinase 1 (417 aa).

N-acetylserine is present on S2. A phosphoserine mark is found at S2 and S4. Position 6 is an N6-succinyllysine (K6). At K11 the chain carries N6-acetyllysine. 6 residues coordinate (2R)-3-phosphoglycerate: V23, D24, F25, N26, Q38, and R39. The tract at residues 38–43 is mitochondrial targeting region exposed following cis-trans isomerization by PIN1 and recognized by the TOM complex for mitochondrial translocation of the protein; sequence QRIKAA. At K48 the chain carries N6-acetyllysine; alternate. The residue at position 48 (K48) is an N6-succinyllysine; alternate. Residues S62, H63, G65, and R66 each coordinate (2R)-3-phosphoglycerate. K75 carries the N6-acetyllysine modification. The residue at position 76 (Y76) is a Phosphotyrosine. N6-acetyllysine occurs at positions 86 and 91. At K97 the chain carries N6-acetyllysine; alternate. Position 97 is an N6-(2-hydroxyisobutyryl)lysine; alternate (K97). L122 and R123 together coordinate (2R)-3-phosphoglycerate. Position 131 is an N6-acetyllysine; alternate (K131). N6-malonyllysine; alternate is present on K131. K146 carries the post-translational modification N6-acetyllysine. (2R)-3-phosphoglycerate contacts are provided by H170 and R171. An N6-succinyllysine modification is found at K191. The residue at position 196 (Y196) is a Phosphotyrosine. K199 bears the N6-acetyllysine mark. Residue S203 is modified to Phosphoserine; by MAPK1. G214 is a binding site for ADP. A CDP-binding site is contributed by G214. AMP contacts are provided by A215 and K216. Position 215 (A215) interacts with ATP. A215 serves as a coordination point for Mg(2+). Position 216 is an N6-(2-hydroxyisobutyryl)lysine (K216). Mg(2+)-binding residues include A218 and D219. D219 serves as a coordination point for CDP. Residue K220 coordinates AMP. An ATP-binding site is contributed by K220. K220 is subject to N6-(2-hydroxyisobutyryl)lysine. ADP is bound at residue G238. G238 contacts CDP. Residue G239 coordinates AMP. G239 is a binding site for ATP. 2 positions are modified to N6-acetyllysine: K267 and K291. G313 contributes to the AMP binding site. An ATP-binding site is contributed by G313. K323 carries the post-translational modification N6-(2-hydroxyisobutyryl)lysine. 3 residues coordinate CDP: G338, V340, and F343. Residue F343 participates in ADP binding. Residue E344 participates in AMP binding. Position 344 (E344) interacts with ATP. An N6-acetyllysine modification is found at K361. D375 and T376 together coordinate ATP. Residue D375 participates in Mg(2+) binding.

It belongs to the phosphoglycerate kinase family. In terms of assembly, monomer. Interacts with kinase MAPK1/ERK2; the interaction is direct, occurs under hypoxic conditions, and promotes its interaction with PIN1. Interacts with peptidyl-prolyl cis-trans isomerase PIN1; the interaction is direct, occurs under hypoxic conditions, and targets the protein to the mitochondrion by promoting interactions with the TOM complex. Interacts with mitochondrial circRNA mcPGK1 (via its 2nd stem-loop); the interaction is direct and targets the protein to the mitochondrion by promoting interactions with the TOM complex. Interacts with pyruvate dehydrogenase kinase PDK1; the interaction is direct, occurs under hypoxic conditions and leads to PDK1-mediated inhibition of pyruvate dehydrogenase complex activity. Mg(2+) is required as a cofactor. Phosphorylated at Ser-203 by MAPK1/ERK2 under hypoxic conditions, which promotes its mitochondrial targeting. As to expression, mainly expressed in spermatogonia. Localized on the principle piece in the sperm (at protein level). Expression significantly decreased in the testis of elderly men.

It is found in the cytoplasm. It localises to the cytosol. The protein resides in the mitochondrion matrix. It carries out the reaction (2R)-3-phosphoglycerate + ATP = (2R)-3-phospho-glyceroyl phosphate + ADP. The enzyme catalyses L-seryl-[protein] + ATP = O-phospho-L-seryl-[protein] + ADP + H(+). It participates in carbohydrate degradation; glycolysis; pyruvate from D-glyceraldehyde 3-phosphate: step 2/5. Specifically inhibited by heterocyclic compound CBR-470-0. Its function is as follows. Catalyzes one of the two ATP producing reactions in the glycolytic pathway via the reversible conversion of 1,3-diphosphoglycerate to 3-phosphoglycerate. Both L- and D- forms of purine and pyrimidine nucleotides can be used as substrates, but the activity is much lower on pyrimidines. In addition to its role as a glycolytic enzyme, it seems that PGK1 acts as a polymerase alpha cofactor protein (primer recognition protein). Acts as a protein kinase when localized to the mitochondrion where it phosphorylates pyruvate dehydrogenase kinase PDK1 to inhibit pyruvate dehydrogenase complex activity and suppress the formation of acetyl-coenzyme A from pyruvate, and consequently inhibit oxidative phosphorylation and promote glycolysis. May play a role in sperm motility. This is Phosphoglycerate kinase 1 (PGK1) from Homo sapiens (Human).